The chain runs to 33 residues: Dermonecrotic toxin LbSicTox-alphaIB1b (33 aa).

The active site involves H11. Residues E31 and D33 each coordinate Mg(2+).

Belongs to the arthropod phospholipase D family. Class II subfamily. Mg(2+) serves as cofactor. In terms of processing, contains 2 disulfide bonds. Expressed by the venom gland.

It is found in the secreted. It catalyses the reaction an N-(acyl)-sphingosylphosphocholine = an N-(acyl)-sphingosyl-1,3-cyclic phosphate + choline. The catalysed reaction is an N-(acyl)-sphingosylphosphoethanolamine = an N-(acyl)-sphingosyl-1,3-cyclic phosphate + ethanolamine. It carries out the reaction a 1-acyl-sn-glycero-3-phosphocholine = a 1-acyl-sn-glycero-2,3-cyclic phosphate + choline. The enzyme catalyses a 1-acyl-sn-glycero-3-phosphoethanolamine = a 1-acyl-sn-glycero-2,3-cyclic phosphate + ethanolamine. Dermonecrotic toxins cleave the phosphodiester linkage between the phosphate and headgroup of certain phospholipids (sphingolipid and lysolipid substrates), forming an alcohol (often choline) and a cyclic phosphate. This toxin acts on sphingomyelin (SM) with high activity (9.5 U/mg). It may also act on ceramide phosphoethanolamine (CPE), lysophosphatidylcholine (LPC) and lysophosphatidylethanolamine (LPE), but not on lysophosphatidylserine (LPS), and lysophosphatidylglycerol (LPG). It acts by transphosphatidylation, releasing exclusively cyclic phosphate products as second products. Induces dermonecrosis, hemolysis, increased vascular permeability, edema, inflammatory response, and platelet aggregation. The chain is Dermonecrotic toxin LbSicTox-alphaIB1b from Loxosceles boneti (North American fiddleback spider).